A 399-amino-acid chain; its full sequence is Dual-specificity RNA methyltransferase RlmN (399 aa).

The active-site Proton acceptor is the E122. The Radical SAM core domain occupies 128–371; it reads ETDRGTLCVS…VRTPRGRDIL (244 aa). A disulfide bridge links C135 with C374. [4Fe-4S] cluster-binding residues include C142, C146, and C149. S-adenosyl-L-methionine-binding positions include 200 to 201, S232, 254 to 256, and N331; these read GE and SLH. C374 (S-methylcysteine intermediate) is an active-site residue.

It belongs to the radical SAM superfamily. RlmN family. Requires [4Fe-4S] cluster as cofactor.

It localises to the cytoplasm. It catalyses the reaction adenosine(2503) in 23S rRNA + 2 reduced [2Fe-2S]-[ferredoxin] + 2 S-adenosyl-L-methionine = 2-methyladenosine(2503) in 23S rRNA + 5'-deoxyadenosine + L-methionine + 2 oxidized [2Fe-2S]-[ferredoxin] + S-adenosyl-L-homocysteine. The catalysed reaction is adenosine(37) in tRNA + 2 reduced [2Fe-2S]-[ferredoxin] + 2 S-adenosyl-L-methionine = 2-methyladenosine(37) in tRNA + 5'-deoxyadenosine + L-methionine + 2 oxidized [2Fe-2S]-[ferredoxin] + S-adenosyl-L-homocysteine. In terms of biological role, specifically methylates position 2 of adenine 2503 in 23S rRNA and position 2 of adenine 37 in tRNAs. m2A2503 modification seems to play a crucial role in the proofreading step occurring at the peptidyl transferase center and thus would serve to optimize ribosomal fidelity. The polypeptide is Dual-specificity RNA methyltransferase RlmN (Rhodopseudomonas palustris (strain BisB18)).